The sequence spans 337 residues: Phosphoribosylformylglycinamidine cyclo-ligase (337 aa).

The protein belongs to the AIR synthase family.

The protein localises to the cytoplasm. It catalyses the reaction 2-formamido-N(1)-(5-O-phospho-beta-D-ribosyl)acetamidine + ATP = 5-amino-1-(5-phospho-beta-D-ribosyl)imidazole + ADP + phosphate + H(+). The protein operates within purine metabolism; IMP biosynthesis via de novo pathway; 5-amino-1-(5-phospho-D-ribosyl)imidazole from N(2)-formyl-N(1)-(5-phospho-D-ribosyl)glycinamide: step 2/2. The protein is Phosphoribosylformylglycinamidine cyclo-ligase of Gloeobacter violaceus (strain ATCC 29082 / PCC 7421).